Reading from the N-terminus, the 1436-residue chain is MAP kinase kinase kinase win1 (1436 aa).

The interval Leu-56–Lys-85 is disordered. Residues Ser-76 to Lys-85 show a composition bias toward basic and acidic residues. Position 224 is a phosphoserine (Ser-224). Residue Thr-226 is modified to Phosphothreonine. The interaction with tea4 stretch occupies residues Glu-282–Gly-1123. The Protein kinase domain occupies Trp-1120–Val-1406. ATP-binding positions include Ile-1126 to Val-1134 and Lys-1149. Asp-1244 acts as the Proton acceptor in catalysis.

This sequence belongs to the protein kinase superfamily. STE Ser/Thr protein kinase family. MAP kinase kinase kinase subfamily. In terms of assembly, interacts with tea4.

It carries out the reaction L-seryl-[protein] + ATP = O-phospho-L-seryl-[protein] + ADP + H(+). The catalysed reaction is L-threonyl-[protein] + ATP = O-phospho-L-threonyl-[protein] + ADP + H(+). Functionally, involved in a signal transduction pathway that is activated by changes in the osmolarity of the extracellular environment. Activates the wis1 MAP kinase kinase by phosphorylation. The protein is MAP kinase kinase kinase win1 (win1) of Schizosaccharomyces pombe (strain 972 / ATCC 24843) (Fission yeast).